A 75-amino-acid chain; its full sequence is Small ribosomal subunit protein bS18 (75 aa).

Basic residues predominate over residues 1-11; it reads MAAKPFFRRRK. Positions 1 to 21 are disordered; that stretch reads MAAKPFFRRRKTDPFEGENAP.

Belongs to the bacterial ribosomal protein bS18 family. In terms of assembly, part of the 30S ribosomal subunit. Forms a tight heterodimer with protein bS6.

In terms of biological role, binds as a heterodimer with protein bS6 to the central domain of the 16S rRNA, where it helps stabilize the platform of the 30S subunit. This is Small ribosomal subunit protein bS18 from Jannaschia sp. (strain CCS1).